We begin with the raw amino-acid sequence, 23 residues long: Basic phospholipase A2 homolog Vur-S49 analog (23 aa).

Residues 1-23 are disordered; the sequence is SVLEIGLMLQEETEKNPKTSYSI.

In terms of processing, contains 7 disulfide bonds. As to expression, expressed by the venom gland.

The protein localises to the secreted. The protein is Basic phospholipase A2 homolog Vur-S49 analog of Vipera renardi (Steppe viper).